The following is a 39-amino-acid chain: Cytochrome b559 subunit beta (39 aa).

Residues Trp-14–Ser-30 form a helical membrane-spanning segment. His-18 is a binding site for heme.

Belongs to the PsbE/PsbF family. Heterodimer of an alpha subunit and a beta subunit. PSII is composed of 1 copy each of membrane proteins PsbA, PsbB, PsbC, PsbD, PsbE, PsbF, PsbH, PsbI, PsbJ, PsbK, PsbL, PsbM, PsbT, PsbX, PsbY, PsbZ, Psb30/Ycf12, at least 3 peripheral proteins of the oxygen-evolving complex and a large number of cofactors. It forms dimeric complexes. Heme b serves as cofactor.

It is found in the plastid. Its subcellular location is the chloroplast thylakoid membrane. Its function is as follows. This b-type cytochrome is tightly associated with the reaction center of photosystem II (PSII). PSII is a light-driven water:plastoquinone oxidoreductase that uses light energy to abstract electrons from H(2)O, generating O(2) and a proton gradient subsequently used for ATP formation. It consists of a core antenna complex that captures photons, and an electron transfer chain that converts photonic excitation into a charge separation. The sequence is that of Cytochrome b559 subunit beta from Ephedra sinica (Chinese ephedra).